Consider the following 324-residue polypeptide: o-succinylbenzoate synthase (324 aa).

The active-site Proton donor is Lys-135. Mg(2+)-binding residues include Asp-163, Glu-192, and Asp-215. The active-site Proton acceptor is the Lys-237.

It belongs to the mandelate racemase/muconate lactonizing enzyme family. MenC type 1 subfamily. A divalent metal cation serves as cofactor.

It catalyses the reaction (1R,6R)-6-hydroxy-2-succinyl-cyclohexa-2,4-diene-1-carboxylate = 2-succinylbenzoate + H2O. The protein operates within quinol/quinone metabolism; 1,4-dihydroxy-2-naphthoate biosynthesis; 1,4-dihydroxy-2-naphthoate from chorismate: step 4/7. It participates in quinol/quinone metabolism; menaquinone biosynthesis. Converts 2-succinyl-6-hydroxy-2,4-cyclohexadiene-1-carboxylate (SHCHC) to 2-succinylbenzoate (OSB). In Aliivibrio fischeri (strain ATCC 700601 / ES114) (Vibrio fischeri), this protein is o-succinylbenzoate synthase.